The primary structure comprises 530 residues: Na(+)/H(+) antiporter NhaB (530 aa).

A run of 11 helical transmembrane segments spans residues 23-43 (VAIIAFLIINPIVFFFINPFL), 45-65 (GWLLVVEFIFTLAMALKCYPL), 90-110 (LVANIEVLLLLVFMVAGIYFM), 113-133 (LLLFIFTKILLGIRSKVLLSI), 140-160 (AFLSAFLDALTVIAVIISVAV), 205-225 (LLMHAGVGTALGGVTTMVGEP), 238-258 (FGEFLLRMAPVTVPVFIAGML), 308-328 (IAVWLIVGLALHLAAVGLIGL), 351-371 (EEALPFTALLAVFFSIVAVII), 451-471 (ATPNGQAAFLFLLTSALAPLI), and 479-499 (VIMAFPYTLALSLVGFIGIMF).

The protein belongs to the NhaB Na(+)/H(+) (TC 2.A.34) antiporter family.

The protein localises to the cell inner membrane. The enzyme catalyses 2 Na(+)(in) + 3 H(+)(out) = 2 Na(+)(out) + 3 H(+)(in). Its function is as follows. Na(+)/H(+) antiporter that extrudes sodium in exchange for external protons. The polypeptide is Na(+)/H(+) antiporter NhaB (Vibrio cholerae serotype O1 (strain ATCC 39541 / Classical Ogawa 395 / O395)).